The chain runs to 462 residues: Argininosuccinate lyase (462 aa).

Belongs to the lyase 1 family. Argininosuccinate lyase subfamily.

It is found in the cytoplasm. The enzyme catalyses 2-(N(omega)-L-arginino)succinate = fumarate + L-arginine. It participates in amino-acid biosynthesis; L-arginine biosynthesis; L-arginine from L-ornithine and carbamoyl phosphate: step 3/3. This Dechloromonas aromatica (strain RCB) protein is Argininosuccinate lyase.